The following is a 1857-amino-acid chain: Peripheral-type benzodiazepine receptor-associated protein 1 (1857 aa).

3 disordered regions span residues Met1–Asp103, Gln284–Ala321, and Pro565–Ser629. Residues Leu55 to Gly67 show a composition bias toward basic and acidic residues. The segment covering Leu87–Pro96 has biased composition (polar residues). Pro residues predominate over residues Pro289 to Pro298. 2 stretches are compositionally biased toward low complexity: residues Ala299–Thr316 and Ser603–Ser616. One can recognise an SH3 1 domain in the interval Ala653 to Asp720. The interval Pro729 to Pro789 is disordered. The span at Gly755–Gln764 shows a compositional bias: low complexity. Fibronectin type-III domains are found at residues Val791–Gly882, Val884–Ala976, and Ala981–Ala1081. 3 disordered regions span residues Leu1083–Glu1311, Phe1330–Gly1479, and Tyr1501–Arg1601. Residues Ala1098–Leu1116 show a composition bias toward low complexity. The span at Glu1138–Pro1147 shows a compositional bias: basic and acidic residues. Residues Ala1201–Met1218 show a composition bias toward polar residues. Over residues Asp1259–Glu1274 the composition is skewed to acidic residues. Residues Arg1278–Arg1292 are compositionally biased toward polar residues. A compositionally biased stretch (acidic residues) spans Pro1333 to Glu1346. Basic and acidic residues-rich tracts occupy residues Arg1420 to Ser1429 and Ala1554 to Gly1586. The region spanning Leu1625–Val1693 is the SH3 2 domain. Disordered stretches follow at residues Val1723 to Ala1761 and Ser1823 to Cys1857. The 68-residue stretch at Lys1764–Pro1831 folds into the SH3 3 domain.

This sequence belongs to the RIMBP family. In terms of assembly, interacts with RIMS1 and RIMS2. Interacts with TSPO. Interacts with CACNA1A. As to expression, predominantly expressed in brain, pituitary gland and thymus in adults. In adult brain, highest expression found in temporal lobe and the putamen, followed by amygdala, caudate nucleus, cerebral cortex, occipital and frontal lobe. A high expression level is also observed in fetal tissues like brain, heart, kidney and thymus.

Its subcellular location is the cytoplasm. It localises to the mitochondrion. Its function is as follows. Required for synaptic transmission regulation. It probably controls the recruitement of voltage-gated calcium channels to the presynaptic membrane, and modulates neurotransmitter release. In Homo sapiens (Human), this protein is Peripheral-type benzodiazepine receptor-associated protein 1.